The chain runs to 565 residues: Oxygen-dependent choline dehydrogenase (565 aa).

6–35 is a binding site for FAD; it reads DYIIVGAGSAGNTLATRLTEDASVSVLLLE. Positions 182-203 are disordered; it reads QQEGFGPMDRSVTKKGRRSSTA. The Proton acceptor role is filled by histidine 475.

It belongs to the GMC oxidoreductase family. The cofactor is FAD.

It carries out the reaction choline + A = betaine aldehyde + AH2. The catalysed reaction is betaine aldehyde + NAD(+) + H2O = glycine betaine + NADH + 2 H(+). Its pathway is amine and polyamine biosynthesis; betaine biosynthesis via choline pathway; betaine aldehyde from choline (cytochrome c reductase route): step 1/1. Its function is as follows. Involved in the biosynthesis of the osmoprotectant glycine betaine. Catalyzes the oxidation of choline to betaine aldehyde and betaine aldehyde to glycine betaine at the same rate. The polypeptide is Oxygen-dependent choline dehydrogenase (Pseudomonas entomophila (strain L48)).